Reading from the N-terminus, the 147-residue chain is MDTLTAIGRWLAKQHVVTWCVHHEGELWCANAFYLFDAQNVALYLLTDDKTRHAQMSGACAPVAGTVNGQPKTVARIRGVQFKGEIRRLEGQESDAARKAYLRRFPVARVLPAPVWEIRLDEIKFTDNTLGFGKKLHWLRDSRAQQA.

Belongs to the UPF0306 family.

The polypeptide is UPF0306 protein YhbP (Salmonella agona (strain SL483)).